A 551-amino-acid polypeptide reads, in one-letter code: Probable terminase, large subunit gp28 (551 aa).

This sequence belongs to the T4likevirus large terminase family. Interacts with the terminase small subunit gp28. Requires Mg(2+) as cofactor.

The protein localises to the host cytoplasm. Functionally, the terminase large subunit acts as an ATP driven molecular motor necessary for viral DNA translocation into empty capsids and as an endonuclease that cuts the viral genome to initiate and to end a packaging reaction. The terminase lies at a unique vertex of the procapsid and is composed of two subunits, a small terminase subunit involved in viral DNA recognition (packaging sequence), and a large terminase subunit possessing endonucleolytic and ATPase activities. Both terminase subunits heterooligomerize and are docked on the portal protein to form the packaging machine. The terminase large subunit exhibits endonuclease activity and cleaves the viral genome concatemer once the capsid is full (headful packaging). Once the capsid is packaged with the DNA, the terminase complex is substituted by neck proteins. The chain is Probable terminase, large subunit gp28 from Escherichia phage Mu (Bacteriophage Mu).